We begin with the raw amino-acid sequence, 526 residues long: Protein translocase subunit SecD (526 aa).

6 helical membrane passes run 8 to 28, 356 to 376, 379 to 399, 405 to 425, 453 to 473, and 478 to 498; these read LIVFIFALLLGVGFSVPSLLE, IIALVGGFILVMGFMALYYSM, VIACMALVVNLFLIVAVMAIF, LPGMAGIVLTVGIAVDANIII, AIFDSNITSLIASVLLYAYGT, and GFALTTGIGILASIITAIIGT.

Belongs to the SecD/SecF family. SecD subfamily. Forms a complex with SecF. Part of the essential Sec protein translocation apparatus which comprises SecA, SecYEG and auxiliary proteins SecDF-YajC and YidC.

It localises to the cell inner membrane. Functionally, part of the Sec protein translocase complex. Interacts with the SecYEG preprotein conducting channel. SecDF uses the proton motive force (PMF) to complete protein translocation after the ATP-dependent function of SecA. The chain is Protein translocase subunit SecD from Helicobacter pylori (strain J99 / ATCC 700824) (Campylobacter pylori J99).